Consider the following 176-residue polypeptide: 3-hydroxydecanoyl-[acyl-carrier-protein] dehydratase (176 aa).

Histidine 70 is an active-site residue.

The protein belongs to the thioester dehydratase family. FabA subfamily. In terms of assembly, homodimer.

The protein localises to the cytoplasm. It catalyses the reaction a (3R)-hydroxyacyl-[ACP] = a (2E)-enoyl-[ACP] + H2O. The catalysed reaction is (3R)-hydroxydecanoyl-[ACP] = (2E)-decenoyl-[ACP] + H2O. The enzyme catalyses (2E)-decenoyl-[ACP] = (3Z)-decenoyl-[ACP]. It participates in lipid metabolism; fatty acid biosynthesis. Its function is as follows. Necessary for the introduction of cis unsaturation into fatty acids. Catalyzes the dehydration of (3R)-3-hydroxydecanoyl-ACP to E-(2)-decenoyl-ACP and then its isomerization to Z-(3)-decenoyl-ACP. Can catalyze the dehydratase reaction for beta-hydroxyacyl-ACPs with saturated chain lengths up to 16:0, being most active on intermediate chain length. The sequence is that of 3-hydroxydecanoyl-[acyl-carrier-protein] dehydratase from Alkalilimnicola ehrlichii (strain ATCC BAA-1101 / DSM 17681 / MLHE-1).